A 546-amino-acid chain; its full sequence is MEQRRVTDFFARRRPGPPRIAPPKLACRTPSPARPALRAPASATSGSRKRARPPAAPGRDQARPPARRRLRLSVDEVSSPSTPEAPDIPACPSPGQKIKKSTPAAGQPPHLTSAQDQDTISELASCLQRARELGARVRALKASAQDAGESCTPEAEGRPEEPCGEKAPAYQRFHALAQPGLPGLVLPYKYQVLAEMFRSMDTIVGMLHNRSETPTFAKVQRGVQDMMRRRFEECNVGQIKTVYPASYRFRQERSVPTFKDGTRRSDYQLTIEPLLEQEADGAAPQLTASRLLQRRQIFSQKLVEHVKEHHKAFLASLSPAMVVPEDQLTRWHPRFNVDEVPDIEPAALPQPPATEKLTTAQEVLARARNLISPRMEKALSQLALRSAAPSSPGSPRPALPATPPATPPAASPSALKGVSQDLLERIRAKEAQKQLAQMTRCPEQEQRLQRLERLPELARVLRSVFVSERKPALSMEVACARMVGSCCTIMSPGEMEKHLLLLSELLPDWLSLHRIRTDTYVKLDKAADLAHITARLAHQTRAEEGL.

Positions 1 to 11 (MEQRRVTDFFA) are enriched in basic and acidic residues. Positions 1–23 (MEQRRVTDFFARRRPGPPRIAPP) match the PIP-box K+4 motif motif. Disordered regions lie at residues 1–118 (MEQR…QDQD) and 143–165 (SAQDAGESCTPEAEGRPEEPCGE). Residues 28–45 (RTPSPARPALRAPASATS) are compositionally biased toward low complexity. Residue Thr-29 is modified to Phosphothreonine; by MAPK8. Ser-31 bears the Phosphoserine mark. Residues 68 to 70 (RRL) carry the Cyclin-binding motif motif. At Ser-93 the chain carries Phosphoserine; by MAPK8. The tract at residues 150–190 (SCTPEAEGRPEEPCGEKAPAYQRFHALAQPGLPGLVLPYKY) is interaction with GMNN. A compositionally biased stretch (basic and acidic residues) spans 155 to 164 (AEGRPEEPCG). Ser-318 is modified (phosphoserine; by MAPK8). 2 positions are modified to phosphoserine: Ser-380 and Ser-394. The disordered stretch occupies residues 383-415 (ALRSAAPSSPGSPRPALPATPPATPPAASPSAL). Positions 392–410 (PGSPRPALPATPPATPPAA) are enriched in pro residues. The segment at 451–546 (LERLPELARV…AHQTRAEEGL (96 aa)) is interaction with LRWD1.

The protein belongs to the Cdt1 family. Interacts with GMNN; the interaction inhibits binding of the MCM complex to origins of replication. Interacts with MCM6. Interacts with CDC6; are mutually dependent on one another for loading MCM complexes onto chromatin. Interacts with PCNA. Interacts with LRWD1 during G1 phase and during mitosis. Interacts with NDC80 subunit of the NDC80 complex; leading to kinetochore localization. Interacts with GRWD1; origin binding of GRWD1 is dependent on CDT1. Interacts with KAT7. Interacts with ubiquitin-binding protein FAF1; the interaction is likely to promote CDT1 degradation. In terms of processing, two independent E3 ubiquitin ligase complexes, SCF(SKP2) and the DCX(DTL) complex, mediated CDT1 degradation in S phase. Ubiquitinated by the DCX(DTL) complex, in response to DNA damage, leading to its degradation. Ubiquitination by the DCX(DTL) complex is necessary to ensure proper cell cycle regulation and is PCNA-dependent: interacts with PCNA via its PIP-box, while the presence of the containing the 'K+4' motif in the PIP box, recruit the DCX(DTL) complex, leading to its degradation. Phosphorylation at Thr-29 by CDK2 targets CDT1 for ubiquitination by SCF(SKP2) E3 ubiquitin ligase and subsequent degradation. The interaction with GMNN protects it against ubiquitination. Deubiquitinated by USP37. Ubiquitinated and degraded by the SCF(FBXO31) complex during the G2 phase to prevent re-replication. Phosphorylation by cyclin A-dependent kinases at Thr-29 targets CDT1 for ubiquitynation by SCF(SKP2) E3 ubiquitin ligase and subsequent degradation. Phosphorylated at Thr-29 by MAPK8/JNK1, which blocks replication licensing in response to stress. Binding to GMNN is not affected by phosphorylation.

The protein resides in the nucleus. It localises to the chromosome. Its subcellular location is the centromere. It is found in the kinetochore. In terms of biological role, required for both DNA replication and mitosis. DNA replication licensing factor, required for pre-replication complex assembly. Cooperates with CDC6 and the origin recognition complex (ORC) during G1 phase of the cell cycle to promote the loading of the mini-chromosome maintenance (MCM) complex onto DNA to generate pre-replication complexes (pre-RC). Required also for mitosis by promoting stable kinetochore-microtubule attachments. Potential oncogene. This chain is DNA replication factor Cdt1, found in Homo sapiens (Human).